A 152-amino-acid chain; its full sequence is Transcriptional regulator MraZ (152 aa).

2 SpoVT-AbrB domains span residues 5–52 (ATLV…PLPE) and 81–124 (ASEC…DEQT).

This sequence belongs to the MraZ family. In terms of assembly, forms oligomers.

It is found in the cytoplasm. It localises to the nucleoid. Negatively regulates its own expression and that of the subsequent genes in the proximal part of the division and cell wall (dcw) gene cluster. Acts by binding directly to DNA. May also regulate the expression of genes outside the dcw cluster. The protein is Transcriptional regulator MraZ of Erwinia tasmaniensis (strain DSM 17950 / CFBP 7177 / CIP 109463 / NCPPB 4357 / Et1/99).